A 207-amino-acid polypeptide reads, in one-letter code: ATP-dependent Clp protease proteolytic subunit (207 aa).

The active-site Nucleophile is the S111. H136 is an active-site residue.

It belongs to the peptidase S14 family. Fourteen ClpP subunits assemble into 2 heptameric rings which stack back to back to give a disk-like structure with a central cavity, resembling the structure of eukaryotic proteasomes.

The protein localises to the cytoplasm. It catalyses the reaction Hydrolysis of proteins to small peptides in the presence of ATP and magnesium. alpha-casein is the usual test substrate. In the absence of ATP, only oligopeptides shorter than five residues are hydrolyzed (such as succinyl-Leu-Tyr-|-NHMec, and Leu-Tyr-Leu-|-Tyr-Trp, in which cleavage of the -Tyr-|-Leu- and -Tyr-|-Trp bonds also occurs).. In terms of biological role, cleaves peptides in various proteins in a process that requires ATP hydrolysis. Has a chymotrypsin-like activity. Plays a major role in the degradation of misfolded proteins. The protein is ATP-dependent Clp protease proteolytic subunit of Yersinia pseudotuberculosis serotype O:1b (strain IP 31758).